The following is a 222-amino-acid chain: Superoxide dismutase [Mn], mitochondrial (222 aa).

A mitochondrion-targeting transit peptide spans 1–24; sequence MLSRAVCGTSRQLAPVLGYLGSRQ. His50 is a binding site for Mn(2+). At Tyr58 the chain carries 3'-nitrotyrosine. An N6-acetyllysine; alternate mark is found at Lys68 and Lys75. N6-succinyllysine; alternate occurs at positions 68 and 75. His98 contacts Mn(2+). N6-acetyllysine is present on Lys114. N6-acetyllysine; alternate is present on residues Lys122 and Lys130. An N6-succinyllysine; alternate mark is found at Lys122 and Lys130. The Mn(2+) site is built by Asp183 and His187. N6-acetyllysine is present on Lys202.

The protein belongs to the iron/manganese superoxide dismutase family. As to quaternary structure, homotetramer. The cofactor is Mn(2+). Post-translationally, nitrated under oxidative stress. Nitration coupled with oxidation inhibits the catalytic activity. In terms of processing, acetylation at Lys-122 decreases enzymatic activity. Deacetylated by SIRT3 upon exposure to ionizing radiations or after long fasting. Polyubiquitinated; leading to proteasomal degradation. Deubiquitinated by USP36 which increases protein stability.

The protein localises to the mitochondrion matrix. The catalysed reaction is 2 superoxide + 2 H(+) = H2O2 + O2. Destroys superoxide anion radicals which are normally produced within the cells and which are toxic to biological systems. This Homo sapiens (Human) protein is Superoxide dismutase [Mn], mitochondrial (SOD2).